The following is an 853-amino-acid chain: DNA mismatch repair protein MutS (853 aa).

Residue 613-620 coordinates ATP; that stretch reads GPNMGGKS.

The protein belongs to the DNA mismatch repair MutS family.

This protein is involved in the repair of mismatches in DNA. It is possible that it carries out the mismatch recognition step. This protein has a weak ATPase activity. In Vibrio campbellii (strain ATCC BAA-1116), this protein is DNA mismatch repair protein MutS.